A 580-amino-acid polypeptide reads, in one-letter code: External alternative NAD(P)H-ubiquinone oxidoreductase B3, mitochondrial (580 aa).

A mitochondrion-targeting transit peptide spans 1–38 (MRPFAYFERLSQAFHDYPSLSKILVVSTISGGGLIVYS). 57–87 (KVVLLGTGWAGASFLKTLNNSSYEVQVISPR) provides a ligand contact to FAD. 221–257 (LHFVVVGGGPTGVEFASELHDFVNEDLVKLYPKAKNL) is a binding site for NAD(+). One can recognise an EF-hand domain in the interval 377–412 (KVMEDIAAIFKKADKENSGTLTMKEFHEVMSDICDR). Ca(2+) contacts are provided by D390, S394, T396, and E401. The Microbody targeting signal signature appears at 571-580 (FIFGRDSSRI).

Belongs to the NADH dehydrogenase family. FAD serves as cofactor. As to expression, expressed at low levels in seedlings, roots, stems, buds and flowers and, to a lower extent, in leaves and cotyledons.

It localises to the mitochondrion inner membrane. Its subcellular location is the peroxisome. The catalysed reaction is a quinone + NADH + H(+) = a quinol + NAD(+). The enzyme catalyses a ubiquinone + NADH + H(+) = a ubiquinol + NAD(+). In terms of biological role, alternative NADH-ubiquinone oxidoreductase which catalyzes the oxidation of mitochondrial NADH does not translocate protons across the inner mitochondrial membrane. The polypeptide is External alternative NAD(P)H-ubiquinone oxidoreductase B3, mitochondrial (NDB3) (Arabidopsis thaliana (Mouse-ear cress)).